We begin with the raw amino-acid sequence, 242 residues long: 4-hydroxy-tetrahydrodipicolinate reductase (242 aa).

NAD(+) contacts are provided by residues 79-81 (ATT) and 103-106 (SANM). Catalysis depends on H135, which acts as the Proton donor/acceptor. Residue H136 participates in (S)-2,3,4,5-tetrahydrodipicolinate binding. K139 serves as the catalytic Proton donor. 145–146 (GT) provides a ligand contact to (S)-2,3,4,5-tetrahydrodipicolinate.

The protein belongs to the DapB family.

It localises to the cytoplasm. The enzyme catalyses (S)-2,3,4,5-tetrahydrodipicolinate + NAD(+) + H2O = (2S,4S)-4-hydroxy-2,3,4,5-tetrahydrodipicolinate + NADH + H(+). It carries out the reaction (S)-2,3,4,5-tetrahydrodipicolinate + NADP(+) + H2O = (2S,4S)-4-hydroxy-2,3,4,5-tetrahydrodipicolinate + NADPH + H(+). It functions in the pathway amino-acid biosynthesis; L-lysine biosynthesis via DAP pathway; (S)-tetrahydrodipicolinate from L-aspartate: step 4/4. Catalyzes the conversion of 4-hydroxy-tetrahydrodipicolinate (HTPA) to tetrahydrodipicolinate. In Staphylococcus carnosus (strain TM300), this protein is 4-hydroxy-tetrahydrodipicolinate reductase.